The chain runs to 319 residues: Taste receptor type 2 member 14 (319 aa).

Over 1–7 the chain is Extracellular; it reads MDGVIKS. Residues 8-28 traverse the membrane as a helical segment; the sequence is IFTFILILEFIIGNLGNSFIV. Over 29 to 55 the chain is Cytoplasmic; that stretch reads LVNCIDWVKRRKISLVDQLLIALAISR. A helical membrane pass occupies residues 56–76; the sequence is ISLVWSIFGSWCVSVVFPALF. Residues 77-87 are Extracellular-facing; sequence ATEKLLRMLTN. Cholesterol is bound by residues Thr-86 and Trp-89. Residues 88–108 traverse the membrane as a helical segment; it reads IWTVTNHFSVWLATILGTFYF. Topologically, residues 109-129 are cytoplasmic; the sequence is LKIANFSNSIFLYLKWRVKKV. The helical transmembrane segment at 130–150 threads the bilayer; that stretch reads VLVLLLVTLVLLFLNILLINI. Over 151 to 184 the chain is Extracellular; it reads HINASINGYRGNMTCSSASCNFIRFSSAIALTST. Residues Asn-153 and Asn-162 are each glycosylated (N-linked (GlcNAc...) asparagine). Residue Ala-180 participates in cholesterol binding. Residues 185-205 traverse the membrane as a helical segment; the sequence is VFILIPFTLSLATFLLLSFSL. Topologically, residues 206–232 are cytoplasmic; the sequence is WKHRKKMQHTVKGYRDVSTKAHRGVMQ. Residues 233–253 traverse the membrane as a helical segment; that stretch reads TVITFLLLYAVFFLTFFVSIW. The Extracellular portion of the chain corresponds to 254-261; it reads ISERLKEN. The chain crosses the membrane as a helical span at residues 262–282; it reads QIIILSEMMGLAYPSGHSCVL. Residues Ile-265 and Glu-268 each contribute to the cholesterol site. Residues 283–317 lie on the Cytoplasmic side of the membrane; that stretch reads ILGNKKLRQASLSVLWWLRYRFKDGELSGHKEFRE.

The protein belongs to the G-protein coupled receptor T2R family. As to quaternary structure, core component of the TAS2R14-GNAI1 complex, consisting of TAS2R14, GNAI1, GNB1 and GNG2; within the complex interacts with GNAI1. Core component of the TAS2R14-GNAT3 complex, consisting of TAS2R14, GNAT3, GNB1 and GNG2; within the complex interacts with GNAT3. Core component of the TAS2R14-GNAS2 complex, consisting of TAS2R14, GNAS2, GNB1 and GNG2; within the complex interacts with GNAS2.

It is found in the membrane. It carries out the reaction Ca(2+)(in) = Ca(2+)(out). The enzyme catalyses 3',5'-cyclic AMP(in) = 3',5'-cyclic AMP(out). Basal activity is enhanced by binding to bitter tastants, such as flufenamic acid and aristolochic acid. Regulated by cholesterol in a concentration-dependent manner. Functionally, gustducin-linked G-protein coupled receptor that plays a role in the perception of bitterness. The activity of this receptor stimulates GNAT3, activating the gustducin G-protein pathway. Likely plays a role in sensing the chemical composition of the gastrointestinal content and other extra-oral tissues via the inhibitory G-protein pathways. The sequence is that of Taste receptor type 2 member 14 (TAS2R14) from Papio hamadryas (Hamadryas baboon).